A 464-amino-acid polypeptide reads, in one-letter code: NADH-quinone oxidoreductase subunit N (464 aa).

13 helical membrane-spanning segments follow: residues 5 to 25 (MLLA…VLFL), 31 to 51 (LLSA…PASL), 63 to 83 (LFAR…CLLS), 96 to 116 (EYAA…ASTS), 117 to 137 (LVSL…LIAV), 152 to 172 (LLPG…VYAA), 188 to 208 (GAPM…AAAF), 242 to 262 (VFAV…RPLL), 286 to 303 (MLAY…LAVL), 312 to 332 (AGLF…GLLA), 358 to 378 (AVLL…AGFM), 393 to 415 (VGLV…RPVL), and 436 to 456 (LIFV…GPFF).

It belongs to the complex I subunit 2 family. As to quaternary structure, NDH-1 is composed of 14 different subunits. Subunits NuoA, H, J, K, L, M, N constitute the membrane sector of the complex.

It is found in the cell inner membrane. It carries out the reaction a quinone + NADH + 5 H(+)(in) = a quinol + NAD(+) + 4 H(+)(out). NDH-1 shuttles electrons from NADH, via FMN and iron-sulfur (Fe-S) centers, to quinones in the respiratory chain. The immediate electron acceptor for the enzyme in this species is believed to be ubiquinone. Couples the redox reaction to proton translocation (for every two electrons transferred, four hydrogen ions are translocated across the cytoplasmic membrane), and thus conserves the redox energy in a proton gradient. In Syntrophotalea carbinolica (strain DSM 2380 / NBRC 103641 / GraBd1) (Pelobacter carbinolicus), this protein is NADH-quinone oxidoreductase subunit N.